A 155-amino-acid polypeptide reads, in one-letter code: Ribosomal RNA large subunit methyltransferase H (155 aa).

S-adenosyl-L-methionine contacts are provided by residues glycine 104 and 123–128; that span reads LSAMTF.

It belongs to the RNA methyltransferase RlmH family. In terms of assembly, homodimer.

The protein localises to the cytoplasm. It carries out the reaction pseudouridine(1915) in 23S rRNA + S-adenosyl-L-methionine = N(3)-methylpseudouridine(1915) in 23S rRNA + S-adenosyl-L-homocysteine + H(+). In terms of biological role, specifically methylates the pseudouridine at position 1915 (m3Psi1915) in 23S rRNA. The sequence is that of Ribosomal RNA large subunit methyltransferase H from Oleidesulfovibrio alaskensis (strain ATCC BAA-1058 / DSM 17464 / G20) (Desulfovibrio alaskensis).